The sequence spans 236 residues: uncharacterized protein (236 aa).

The HTH gntR-type domain occupies 5-73 (QSTVENAKEK…DRKGWFVTQP (69 aa)). Residues 33 to 52 (ERELGELLGIKRMTLRQALL) constitute a DNA-binding region (H-T-H motif).

This is an uncharacterized protein from Escherichia coli O157:H7.